Reading from the N-terminus, the 170-residue chain is Pollen-specific protein C13 (170 aa).

The first 27 residues, 1–27, serve as a signal peptide directing secretion; that stretch reads MASVPAPATTTAAVILCLCVVLSCAAA. 3 disulfide bridges follow: Cys-43-Cys-114, Cys-46-Cys-155, and Cys-67-Cys-102. N-linked (GlcNAc...) asparagine glycosylation occurs at Asn-53.

It belongs to the Ole e I family. As to expression, pollen.

This chain is Pollen-specific protein C13 (MGS1), found in Zea mays (Maize).